Reading from the N-terminus, the 96-residue chain is Large ribosomal subunit protein eL14 (96 aa).

Belongs to the eukaryotic ribosomal protein eL14 family.

The protein is Large ribosomal subunit protein eL14 of Saccharolobus islandicus (strain Y.N.15.51 / Yellowstone #2) (Sulfolobus islandicus).